The sequence spans 77 residues: MARVCQVTGKGPMVGNNVSHANNKTKRRFMPNLQYRRIWVESENRWVRLRITAAGLRLIDKNGIDAVLVDLRARGEV.

This sequence belongs to the bacterial ribosomal protein bL28 family.

The protein is Large ribosomal subunit protein bL28 of Polaromonas naphthalenivorans (strain CJ2).